The following is a 276-amino-acid chain: Large ribosomal subunit protein uL2 (276 aa).

The interval 221–276 (RGSVMNPNDHPHGGGEGRAPIGRKAPVTPWGKPTLGLKTRKKKNKSDQYIIRRRKK) is disordered.

Belongs to the universal ribosomal protein uL2 family. In terms of assembly, part of the 50S ribosomal subunit. Forms a bridge to the 30S subunit in the 70S ribosome.

Its function is as follows. One of the primary rRNA binding proteins. Required for association of the 30S and 50S subunits to form the 70S ribosome, for tRNA binding and peptide bond formation. It has been suggested to have peptidyltransferase activity; this is somewhat controversial. Makes several contacts with the 16S rRNA in the 70S ribosome. The chain is Large ribosomal subunit protein uL2 from Brevibacillus brevis (strain 47 / JCM 6285 / NBRC 100599).